The sequence spans 41 residues: Large ribosomal subunit protein bL36 (41 aa).

The protein belongs to the bacterial ribosomal protein bL36 family.

In Rhodopseudomonas palustris (strain BisB5), this protein is Large ribosomal subunit protein bL36.